The chain runs to 302 residues: CRISPR-associated endonuclease Cas1 1 (302 aa).

Residues Glu159, His219, and Glu234 each coordinate Mn(2+).

This sequence belongs to the CRISPR-associated endonuclease Cas1 family. As to quaternary structure, homodimer, forms a heterotetramer with a Cas2 homodimer. Mg(2+) serves as cofactor. It depends on Mn(2+) as a cofactor.

Its function is as follows. CRISPR (clustered regularly interspaced short palindromic repeat), is an adaptive immune system that provides protection against mobile genetic elements (viruses, transposable elements and conjugative plasmids). CRISPR clusters contain spacers, sequences complementary to antecedent mobile elements, and target invading nucleic acids. CRISPR clusters are transcribed and processed into CRISPR RNA (crRNA). Acts as a dsDNA endonuclease. Involved in the integration of spacer DNA into the CRISPR cassette. The protein is CRISPR-associated endonuclease Cas1 1 of Pyrobaculum aerophilum (strain ATCC 51768 / DSM 7523 / JCM 9630 / CIP 104966 / NBRC 100827 / IM2).